A 516-amino-acid chain; its full sequence is Acetylcholine receptor subunit delta (516 aa).

Positions 1–21 are cleaved as a signal peptide; that stretch reads MEGSVLTLVLLAALVVCGSWG. Residues 22–244 lie on the Extracellular side of the membrane; the sequence is LNEEERLIRH…VTFYLIIRRK (223 aa). 2 N-linked (GlcNAc...) asparagine glycosylation sites follow: Asn-96 and Asn-163. Cysteines 150 and 164 form a disulfide. The next 3 membrane-spanning stretches (helical) occupy residues 245 to 269, 279 to 296, and 311 to 332; these read PLFY…VFYL, MAIS…LISK, and FLLF…VLNI. At 333-470 the chain is on the cytoplasmic side; that stretch reads HFRTPSTHVL…WNRVARTVDR (138 aa). Tyr-389 carries the post-translational modification Phosphotyrosine; by Tyr-kinases. A helical transmembrane segment spans residues 471-493; that stretch reads LCLFVVTPIMVVGTAWIFLQGAY.

It belongs to the ligand-gated ion channel (TC 1.A.9) family. Acetylcholine receptor (TC 1.A.9.1) subfamily. Delta/CHRND sub-subfamily. In terms of assembly, pentamer of two alpha chains, and one each of the beta, delta, and gamma (in immature muscle) or epsilon (in mature muscle) chains. The muscle heteropentamer composed of alpha-1, beta-1, delta, epsilon subunits interacts with the alpha-conotoxin ImII.

The protein resides in the postsynaptic cell membrane. It localises to the cell membrane. It carries out the reaction K(+)(in) = K(+)(out). The enzyme catalyses Na(+)(in) = Na(+)(out). Functionally, after binding acetylcholine, the AChR responds by an extensive change in conformation that affects all subunits and leads to opening of an ion-conducting channel across the plasma membrane. In Bos taurus (Bovine), this protein is Acetylcholine receptor subunit delta (CHRND).